Reading from the N-terminus, the 194-residue chain is MRQAEIERNTFETKIKLSLNLDAQDPVDIQTGVGFFDHMLTLFARHGRMSLVVKADGDLWVDSHHTVEDVGIVLGQALKEALGDKAGINRYGTSFVPMDETLGMASLDLSGRSFLVFDASFDNPKLGNFDTELIEEFFQALAFNVQMNLHLKILHGKNNHHKSESLFKATGRALREAITVNPDIHGVNSTKGML.

Belongs to the imidazoleglycerol-phosphate dehydratase family.

It localises to the cytoplasm. The enzyme catalyses D-erythro-1-(imidazol-4-yl)glycerol 3-phosphate = 3-(imidazol-4-yl)-2-oxopropyl phosphate + H2O. Its pathway is amino-acid biosynthesis; L-histidine biosynthesis; L-histidine from 5-phospho-alpha-D-ribose 1-diphosphate: step 6/9. In Streptococcus thermophilus (strain ATCC BAA-491 / LMD-9), this protein is Imidazoleglycerol-phosphate dehydratase.